Here is a 125-residue protein sequence, read N- to C-terminus: Fluoride-specific ion channel FluC (125 aa).

Helical transmembrane passes span 4-24 (VIYVALGGAVGSVLRYWVGIV), 32-52 (FLPWGTFSVNLIGSFCIGLFA), 68-88 (LLITGLLGGFTTFSAFMLDTV), and 100-120 (AFYVAASIGFGVGAVFAGLAV). Positions 75 and 78 each coordinate Na(+).

The protein belongs to the fluoride channel Fluc/FEX (TC 1.A.43) family.

The protein resides in the cell inner membrane. It catalyses the reaction fluoride(in) = fluoride(out). Its activity is regulated as follows. Na(+) is not transported, but it plays an essential structural role and its presence is essential for fluoride channel function. Its function is as follows. Fluoride-specific ion channel. Important for reducing fluoride concentration in the cell, thus reducing its toxicity. In Allorhizobium ampelinum (strain ATCC BAA-846 / DSM 112012 / S4) (Agrobacterium vitis (strain S4)), this protein is Fluoride-specific ion channel FluC.